The following is a 263-amino-acid chain: Interleukin-33 (263 aa).

Polar residues predominate over residues 1-17; sequence MKYSTTKIPPAKMNSSA. The interval 1 to 28 is disordered; the sequence is MKYSTTKIPPAKMNSSADKALVKSPKLR. Residues 1-65 form a homeodomain-like HTH domain region; that stretch reads MKYSTTKIPP…CYFRKEITKR (65 aa). An interaction with RELA region spans residues 62–103; it reads ITKRYSPRTAEKCRKQCLVFTACHQQLNKDFTSDVPMLQKCF.

It belongs to the IL-1 family. Highly divergent. Forms a 1:1:1 heterotrimeric complex with its primary high-affinity receptor IL1RL1 and the coreceptor IL1RAP. Interacts with cargo receptor TMED10; the interaction mediates the translocation from the cytoplasm into the ERGIC (endoplasmic reticulum-Golgi intermediate compartment) and thereby secretion. In terms of processing, the full-length protein can be released from cells and is able to signal via the IL1RL1/ST2 receptor. However, proteolytic processing by CELA1, CSTG/cathepsin G and ELANE/neutrophil elastase produces C-terminal peptides that are more active than the unprocessed full-length protein. May also be proteolytically processed by calpains. Proteolytic cleavage mediated by apoptotic caspases including CASP3 and CASP7 results in IL33 inactivation. In vitro proteolytic cleavage by CASP1 was reported but could not be confirmed in vivo suggesting that IL33 is probably not a direct substrate for that caspase. Expressed in cultured umbilical artery smooth muscle cells after stimulation with IL1A and IL1B, and to a lesser extent with IFNG. Expressed in vasospastic cerebral arteries after subarachnoid hemorrhage.

The protein resides in the nucleus. It is found in the chromosome. Its subcellular location is the cytoplasm. The protein localises to the cytoplasmic vesicle. It localises to the secretory vesicle. The protein resides in the secreted. Its function is as follows. Cytokine that binds to and signals through the IL1RL1/ST2 receptor which in turn activates NF-kappa-B and MAPK signaling pathways in target cells. Involved in the maturation of Th2 cells inducing the secretion of T-helper type 2-associated cytokines. Also involved in activation of mast cells, basophils, eosinophils and natural killer cells. Acts as a chemoattractant for Th2 cells, and may function as an 'alarmin', that amplifies immune responses during tissue injury. Induces rapid UCP2-dependent mitochondrial rewiring that attenuates the generation of reactive oxygen species and preserves the integrity of Krebs cycle required for persistent production of itaconate and subsequent GATA3-dependent differentiation of inflammation-resolving alternatively activated macrophages. Functionally, in quiescent endothelia the uncleaved form is constitutively and abundantly expressed, and acts as a chromatin-associated nuclear factor with transcriptional repressor properties, it may sequester nuclear NF-kappaB/RELA, lowering expression of its targets. This form is rapidely lost upon angiogenic or pro-inflammatory activation. This is Interleukin-33 (IL33) from Canis lupus familiaris (Dog).